Reading from the N-terminus, the 292-residue chain is 4-hydroxy-tetrahydrodipicolinate synthase (292 aa).

Thr-45 contacts pyruvate. The active-site Proton donor/acceptor is the Tyr-133. Lys-161 acts as the Schiff-base intermediate with substrate in catalysis. Ile-203 is a pyruvate binding site.

This sequence belongs to the DapA family. As to quaternary structure, homotetramer; dimer of dimers.

It localises to the cytoplasm. It carries out the reaction L-aspartate 4-semialdehyde + pyruvate = (2S,4S)-4-hydroxy-2,3,4,5-tetrahydrodipicolinate + H2O + H(+). Its pathway is amino-acid biosynthesis; L-lysine biosynthesis via DAP pathway; (S)-tetrahydrodipicolinate from L-aspartate: step 3/4. Its function is as follows. Catalyzes the condensation of (S)-aspartate-beta-semialdehyde [(S)-ASA] and pyruvate to 4-hydroxy-tetrahydrodipicolinate (HTPA). The chain is 4-hydroxy-tetrahydrodipicolinate synthase from Acidiphilium cryptum (strain JF-5).